The primary structure comprises 340 residues: Fructose import permease protein FruG (340 aa).

A run of 9 helical transmembrane segments spans residues 23 to 43 (IPTLAAVVIFILMIIMGQALF), 49 to 69 (LGFISSLFIDHAYLIILAVAM), 73 to 93 (ILTGGIDLSVGAIVAITAVVG), 101 to 121 (VPAFLVMIIMLLIGAVFGLLA), 130 to 150 (MQPFIATLSTMFLARGLASII), 182 to 202 (LSFNVGVIIALVVVVFGYVFL), 234 to 254 (IIYLTSATLAALASIVYTANI), 273 to 293 (VVIGGTIITGGFGYVLGSVLG), and 307 to 327 (FGVPAEWTTIVIGLMILVFVV).

Belongs to the binding-protein-dependent transport system permease family. The complex is composed of an ATP-binding protein (FruK), two transmembrane proteins (FruF and FruG) and a solute-binding protein (FruE).

It localises to the cell membrane. Its function is as follows. Part of the high-affinity ABC transporter complex FruEKFG involved in fructose uptake. Can also transport ribose and xylose, with lower affinity. Probably responsible for the translocation of the substrate across the membrane. In Bifidobacterium longum (strain NCC 2705), this protein is Fructose import permease protein FruG.